Consider the following 144-residue polypeptide: F420-non-reducing hydrogenase vhc iron-sulfur subunit D (144 aa).

Belongs to the MvhD/VhuD family. In terms of assembly, the F420-non-reducing hydrogenase vhc is composed of three subunits; VhcA, VhcD and VhcG. [2Fe-2S] cluster is required as a cofactor.

The sequence is that of F420-non-reducing hydrogenase vhc iron-sulfur subunit D (vhcD) from Methanococcus voltae.